Reading from the N-terminus, the 47-residue chain is MKSIDLTILSLKRKGIRTEKVLKNQNPDRLSHMTDKNAQPKSKEKEE.

Residues 19 to 47 are disordered; the sequence is EKVLKNQNPDRLSHMTDKNAQPKSKEKEE.

This is an uncharacterized protein from Bacillus subtilis (strain 168).